The following is a 609-amino-acid chain: UvrABC system protein C (609 aa).

The GIY-YIG domain maps to 16-94 (SSAGVYRMYD…IKQYMPRYNV (79 aa)). Positions 203 to 238 (QQVIATLVGKMEQAAMDLNYEDAARYRDQISALRRV) constitute a UVR domain.

Belongs to the UvrC family. In terms of assembly, interacts with UvrB in an incision complex.

It localises to the cytoplasm. Its function is as follows. The UvrABC repair system catalyzes the recognition and processing of DNA lesions. UvrC both incises the 5' and 3' sides of the lesion. The N-terminal half is responsible for the 3' incision and the C-terminal half is responsible for the 5' incision. In Shewanella loihica (strain ATCC BAA-1088 / PV-4), this protein is UvrABC system protein C.